Consider the following 1140-residue polypeptide: Centrosomal protein of 135 kDa (1140 aa).

A homodimerization region spans residues 11 to 64; sequence NIRKRLDQLGYRQTLTVECLPLVEKLFSDLVHTTESLRQSKLSAVKAEKESANF. 2 coiled-coil regions span residues 75-151 and 199-416; these read NARL…KNLH and LQVA…FAVT. 2 positions are modified to phosphoserine: Ser383 and Ser439. Coiled-coil stretches lie at residues 447–644, 668–1036, and 1079–1113; these read LKGI…LENK, SLRI…LESL, and NTML…AIQE. Ser688 carries the phosphoserine modification. Positions 1114 to 1140 are disordered; the sequence is MRRHGLATPPLSSTLRSPSHSPEHRNV. Thr1121 carries the phosphothreonine modification. Low complexity predominate over residues 1121-1133; the sequence is TPPLSSTLRSPSH. Ser1130 carries the phosphoserine modification.

Belongs to the CEP135/TSGA10 family. In terms of assembly, homodimer. Interacts with DCTN2. Interacts with CEP250.

The protein resides in the cytoplasm. The protein localises to the cytoskeleton. Its subcellular location is the microtubule organizing center. It localises to the centrosome. It is found in the centriole. Centrosomal microtubule-binding protein involved in centriole biogenesis. Acts as a scaffolding protein during early centriole biogenesis. Required for the targeting of centriole satellite proteins to centrosomes such as of PCM1, SSX2IP and CEP290 and recruitment of WRAP73 to centrioles. Also required for centriole-centriole cohesion during interphase by acting as a platform protein for CEP250 at the centriole. Required for the recruitment of CEP295 to the proximal end of new-born centrioles at the centriolar microtubule wall during early S phase in a PLK4-dependent manner. This is Centrosomal protein of 135 kDa from Homo sapiens (Human).